Reading from the N-terminus, the 124-residue chain is NADH-quinone oxidoreductase subunit K (124 aa).

3 helical membrane-spanning segments follow: residues 28–48, 52–72, and 84–104; these read MEHG…GVMV, FLFM…AFIV, and IMFI…LAIL.

It belongs to the complex I subunit 4L family. NDH-1 is composed of 14 different subunits. Subunits NuoA, H, J, K, L, M, N constitute the membrane sector of the complex.

It localises to the cell inner membrane. It catalyses the reaction a quinone + NADH + 5 H(+)(in) = a quinol + NAD(+) + 4 H(+)(out). Functionally, NDH-1 shuttles electrons from NADH, via FMN and iron-sulfur (Fe-S) centers, to quinones in the respiratory chain. The immediate electron acceptor for the enzyme in this species is believed to be ubiquinone. Couples the redox reaction to proton translocation (for every two electrons transferred, four hydrogen ions are translocated across the cytoplasmic membrane), and thus conserves the redox energy in a proton gradient. The protein is NADH-quinone oxidoreductase subunit K of Psychrobacter sp. (strain PRwf-1).